The sequence spans 106 residues: UPF0145 protein PSEEN3024 (106 aa).

This sequence belongs to the UPF0145 family.

This Pseudomonas entomophila (strain L48) protein is UPF0145 protein PSEEN3024.